Reading from the N-terminus, the 73-residue chain is UPF0337 protein lp_1708 (73 aa).

Basic and acidic residues-rich tracts occupy residues 1–35 (MSDVNKKFDSKKDQLSGKAKEVEGKVTGDRAREAQ) and 44–73 (KAKDKLADAEETVKGVVDEAKDKMKKKSDD). The tract at residues 1-73 (MSDVNKKFDS…KDKMKKKSDD (73 aa)) is disordered.

The protein belongs to the UPF0337 (CsbD) family.

The chain is UPF0337 protein lp_1708 from Lactiplantibacillus plantarum (strain ATCC BAA-793 / NCIMB 8826 / WCFS1) (Lactobacillus plantarum).